The chain runs to 144 residues: Nucleoside diphosphate kinase (144 aa).

The ATP site is built by K11, F59, R87, T93, R104, and N114. H117 serves as the catalytic Pros-phosphohistidine intermediate.

The protein belongs to the NDK family. As to quaternary structure, homotetramer. Mg(2+) serves as cofactor.

The protein localises to the cytoplasm. The enzyme catalyses a 2'-deoxyribonucleoside 5'-diphosphate + ATP = a 2'-deoxyribonucleoside 5'-triphosphate + ADP. The catalysed reaction is a ribonucleoside 5'-diphosphate + ATP = a ribonucleoside 5'-triphosphate + ADP. Major role in the synthesis of nucleoside triphosphates other than ATP. The ATP gamma phosphate is transferred to the NDP beta phosphate via a ping-pong mechanism, using a phosphorylated active-site intermediate. The protein is Nucleoside diphosphate kinase of Coxiella burnetii (strain CbuG_Q212) (Coxiella burnetii (strain Q212)).